The primary structure comprises 497 residues: Serine hydroxymethyltransferase, mitochondrial (497 aa).

The transit peptide at 1–27 (MFIRRLHTSSRRLTCGEALRACQQTGA) directs the protein to the mitochondrion. N6-(pyridoxal phosphate)lysine is present on lysine 272.

This sequence belongs to the SHMT family. Homotetramer. Pyridoxal 5'-phosphate is required as a cofactor.

The protein resides in the mitochondrion. It catalyses the reaction (6R)-5,10-methylene-5,6,7,8-tetrahydrofolate + glycine + H2O = (6S)-5,6,7,8-tetrahydrofolate + L-serine. The protein operates within one-carbon metabolism; tetrahydrofolate interconversion. Its function is as follows. Interconversion of serine and glycine. This chain is Serine hydroxymethyltransferase, mitochondrial (SHM1), found in Eremothecium gossypii (strain ATCC 10895 / CBS 109.51 / FGSC 9923 / NRRL Y-1056) (Yeast).